The chain runs to 394 residues: Isopentenyl-diphosphate delta-isomerase (394 aa).

10-11 serves as a coordination point for substrate; sequence RK. FMN is bound by residues threonine 67, 68–70, serine 101, and asparagine 129; that span reads GMT. Substrate is bound at residue 101–103; the sequence is SQR. Glutamine 168 contacts substrate. A Mg(2+)-binding site is contributed by glutamate 169. FMN-binding positions include lysine 200, serine 225, threonine 230, 279–281, and 300–301; these read GMR and AL.

The protein belongs to the IPP isomerase type 2 family. Homooctamer. Dimer of tetramers. FMN is required as a cofactor. Requires NADPH as cofactor. It depends on Mg(2+) as a cofactor.

It is found in the cytoplasm. The enzyme catalyses isopentenyl diphosphate = dimethylallyl diphosphate. Functionally, involved in the biosynthesis of isoprenoids. Catalyzes the 1,3-allylic rearrangement of the homoallylic substrate isopentenyl (IPP) to its allylic isomer, dimethylallyl diphosphate (DMAPP). The sequence is that of Isopentenyl-diphosphate delta-isomerase from Pyrococcus furiosus (strain ATCC 43587 / DSM 3638 / JCM 8422 / Vc1).